A 160-amino-acid chain; its full sequence is Ribosomal RNA large subunit methyltransferase H (160 aa).

S-adenosyl-L-methionine contacts are provided by residues Leu-76, Gly-108, and 127 to 132 (LGKMTW).

It belongs to the RNA methyltransferase RlmH family. As to quaternary structure, homodimer.

It localises to the cytoplasm. It carries out the reaction pseudouridine(1915) in 23S rRNA + S-adenosyl-L-methionine = N(3)-methylpseudouridine(1915) in 23S rRNA + S-adenosyl-L-homocysteine + H(+). Specifically methylates the pseudouridine at position 1915 (m3Psi1915) in 23S rRNA. The sequence is that of Ribosomal RNA large subunit methyltransferase H from Rhizobium johnstonii (strain DSM 114642 / LMG 32736 / 3841) (Rhizobium leguminosarum bv. viciae).